Here is a 530-residue protein sequence, read N- to C-terminus: Phosphoenolpyruvate carboxykinase (ATP) (530 aa).

3 residues coordinate substrate: R58, Y195, and K201. Residues K201, H220, and 236-244 contribute to the ATP site; that span reads GLSGTGKTT. Mn(2+) is bound by residues K201 and H220. D257 provides a ligand contact to Mn(2+). Residues E285, R321, 440–441, and T446 contribute to the ATP site; that span reads RI. R321 serves as a coordination point for substrate.

It belongs to the phosphoenolpyruvate carboxykinase (ATP) family. Mn(2+) is required as a cofactor.

The protein localises to the cytoplasm. It catalyses the reaction oxaloacetate + ATP = phosphoenolpyruvate + ADP + CO2. It participates in carbohydrate biosynthesis; gluconeogenesis. Functionally, involved in the gluconeogenesis. Catalyzes the conversion of oxaloacetate (OAA) to phosphoenolpyruvate (PEP) through direct phosphoryl transfer between the nucleoside triphosphate and OAA. In Staphylococcus aureus (strain MSSA476), this protein is Phosphoenolpyruvate carboxykinase (ATP).